A 147-amino-acid polypeptide reads, in one-letter code: Secreted RxLR effector protein BLN04 (147 aa).

Residues 1 to 23 (MATMRRICFLFVFNLAVATSTQG) form the signal peptide. The dEER motif lies at 58 to 61 (SEER). The chain crosses the membrane as a helical span at residues 117–137 (VYIYTILFLSIPIILGVAMYI).

The protein belongs to the RxLR effector family. Interacts with host transcription factor NAC069.

It localises to the secreted. The protein resides in the host membrane. Its function is as follows. Secreted effector that inhibits stress-induced relocalization of the transcription factor NAC069 to the nucleus, thus affecting its broad role in abiotic and biotic stress responses. The protein is Secreted RxLR effector protein BLN04 of Bremia lactucae (Lettuce downy mildew).